The chain runs to 134 residues: Small ribosomal subunit protein bS6 (134 aa).

The tract at residues 97–134 (TDVSPIKASEGREDRRSAPQREERNHDNSDEVSEESED) is disordered. Positions 105-125 (SEGREDRRSAPQREERNHDNS) are enriched in basic and acidic residues.

It belongs to the bacterial ribosomal protein bS6 family.

Its function is as follows. Binds together with bS18 to 16S ribosomal RNA. The polypeptide is Small ribosomal subunit protein bS6 (Marinomonas sp. (strain MWYL1)).